We begin with the raw amino-acid sequence, 249 residues long: Pleckstrin homology domain-containing family F member 2 (249 aa).

Residue Ser16 is modified to Phosphoserine. One can recognise a PH domain in the interval 35–131 (VLIGEGVLTK…WMNHINKCVT (97 aa)). Lys44 carries the N6-acetyllysine modification. The FYVE-type zinc finger occupies 152-212 (DSEATVCMRC…ICDFCYDLLS (61 aa)). Cys158, Cys161, Cys175, Cys178, Cys183, Cys186, Cys204, and Cys207 together coordinate Zn(2+). Residues 221 to 233 (PARSDSYSQSLKS) are compositionally biased toward polar residues. Residues 221–249 (PARSDSYSQSLKSPLNDMSDDDDDDDSSD) form a disordered region. A compositionally biased stretch (acidic residues) spans 238–249 (MSDDDDDDDSSD). Phosphoserine occurs at positions 239 and 248.

In terms of assembly, may interact with EEA1. In terms of tissue distribution, expressed in placenta, ovary and small intestine, as well as in heart and pancreas. Also expressed in peripheral blood mononuclear cells and dendritic cells.

It is found in the early endosome membrane. It localises to the endoplasmic reticulum. May play a role in early endosome fusion upstream of RAB5, hence regulating receptor trafficking and fluid-phase transport. Enhances cellular sensitivity to TNF-induced apoptosis. In Homo sapiens (Human), this protein is Pleckstrin homology domain-containing family F member 2 (PLEKHF2).